The chain runs to 299 residues: DNA-binding transcriptional activator HetR (299 aa).

Residues methionine 1–glutamine 98 form a DNA-binding domain region. Residues arginine 34 to aspartate 40 and asparagine 60 to lysine 76 each bind DNA. Positions glutamate 99–alanine 216 are flap domain. Serine 152 is a catalytic residue. Serine 179–alanine 181 is a binding site for DNA. Residues proline 217–aspartate 299 form a hood domain region.

This sequence belongs to the peptidase S48 family. Upon expression in E.coli most protein is monomeric, although varying amounts of homodimer can be seen. Homodimer; disulfide-linked. Homodimer. Binds the 6 residue C-terminal peptide of PatS; one peptide binds to each subunit. In bacterial two-hybrid assays interacts robustly with itself, Alr2902 and Alr3234 and more weakly with Als1930. Probably autodegrades.

Protease activity is inhibited by PMSF, suggesting this is a serine protease. In terms of biological role, controls heterocyst differentiation. Dimerization is required for DNA-binding. Has both a protease and a DNA-binding activity. Controls heterocyst differentiation; increased expression leads to more heterocysts than usual. Has protease activity. Binds the promoter regions of hetR, hepA and patS and is required for their expression. Dimerization is required for DNA-binding, DNA-binding is inhibited by the PatS6 peptide. Binds the inverted repeat 5'-GTAGGCGAGGGGTCTAACCCCTCATTACC-3' found in the hetP promoter, required for expression of hetP. This Nostoc sp. (strain PCC 7120 / SAG 25.82 / UTEX 2576) protein is DNA-binding transcriptional activator HetR.